The following is a 504-amino-acid chain: Sodium-coupled neutral amino acid transporter 3 (504 aa).

Ser-52 carries the phosphoserine; by PKC modification. N-linked (GlcNAc...) asparagine glycosylation occurs at Asn-73. Helical transmembrane passes span 82 to 102 (GILGLAYAMANTGIILFLFLL), 105 to 125 (VALLSSYSIHLLLKSSGIVGI), 143 to 163 (AAALAITLQNIGAMSSYLYII), 186 to 206 (MDGNYLVILVSVIIILPLALM), and 212 to 232 (LGYSSGFSLSCMVFFLIAVIY). Cys-239 and Cys-275 are disulfide-bonded. N-linked (GlcNAc...) asparagine glycosylation is found at Asn-247 and Asn-251. Residues 287–307 (AYTIPIMAFAFVCHPEVLPIY) form a helical membrane-spanning segment. Asn-323 is a glycosylation site (N-linked (GlcNAc...) asparagine). The next 5 helical transmembrane spans lie at 324-344 (LSIAVMYVMYFLAALFGYLTF), 366-386 (ILCVRVAVLIAVTLTVPIVLF), 408-428 (VLIATGLLTCINLLVIFAPNI), 431-451 (IFGIIGATSAPCLIFIFPAIF), and 469-489 (ILALCFAAVGFLLMTMSLSFI).

The protein belongs to the amino acid/polyamine transporter 2 family. In terms of processing, phosphorylation at Ser-52 induces internalization and sequestration into an intracellular reservoir. During dephosphorylation by protein phosphatases, can recycle back to the plasma membrane and regain activity. Prolonged phosphorylation results in its degradation. Highly expressed in liver. Expressed in skeletal muscle. Expressed in kidney, heart and brain. Not detected in gut, lung or spleen. Expressed ubiquitously in hepatocytes in liver whereas in kidney expression is restricted to the medulla. Within brain, expressed in glial cells. In the cerebellum, expressed on Bergmann glial fibers in the molecular layer and astrocytes in the granule layer. Expressed in brain kidney and liver (at protein level). In the adult kidney, highly expressed in the outer strip of the outer medulla and medullary rays penetrating into the kidney cortex (at protein level).

Its subcellular location is the cell membrane. The protein localises to the basolateral cell membrane. It carries out the reaction L-glutamine(out) + Na(+)(out) + H(+)(in) = L-glutamine(in) + Na(+)(in) + H(+)(out). The enzyme catalyses L-asparagine(out) + Na(+)(out) + H(+)(in) = L-asparagine(in) + Na(+)(in) + H(+)(out). The catalysed reaction is L-histidine(out) + Na(+)(out) + H(+)(in) = L-histidine(in) + Na(+)(in) + H(+)(out). Its activity is regulated as follows. L-glutamine efflux and L-glutamine uptake are regulated by CO2/HCO3(-) through SLC4A4 leading to modulation of cytosolic pH and Na(+)concentration. Symporter that cotransports specific neutral amino acids and sodium ions, coupled to an H(+) antiporter activity. Mainly participates in the glutamate-GABA-glutamine cycle in brain where it transports L-glutamine from astrocytes in the intercellular space for the replenishment of both neurotransmitters glutamate and gamma-aminobutyric acid (GABA) in neurons. Also functions as the major influx transporter in ganglion cells mediating the uptake of glutamine. The transport activity is specific for L-glutamine, L-histidine and L-asparagine. The transport is electroneutral coupled to the cotransport of 1 Na(+) and the antiport of 1 H(+), pH dependent, saturable, Li(+) tolerant and functions in both direction depending on the concentration gradients of its substrates and cotransported ions. Also mediates an amino acid-gated H(+) conductance that is not stoichiometrically coupled to the amino acid transport but which influences the ionic gradients that drive the amino acid transport. In addition, may play a role in nitrogen metabolism, amino acid homeostasis, glucose metabolism and renal ammoniagenesis. This Rattus norvegicus (Rat) protein is Sodium-coupled neutral amino acid transporter 3.